The following is a 351-amino-acid chain: Aromatic amino acid aminotransferase (351 aa).

N6-(pyridoxal phosphate)lysine is present on lysine 215.

Belongs to the class-II pyridoxal-phosphate-dependent aminotransferase family. As to quaternary structure, homodimer. The cofactor is pyridoxal 5'-phosphate.

The enzyme catalyses an aromatic L-alpha-amino acid + 2-oxoglutarate = an aromatic oxo-acid + L-glutamate. Its function is as follows. Aminotransferase that catalyzes the conversion of aromatic amino acids and 2-oxoglutarate into corresponding aromatic oxo acids and L-glutamate. The chain is Aromatic amino acid aminotransferase from Mycolicibacterium vanbaalenii (strain DSM 7251 / JCM 13017 / BCRC 16820 / KCTC 9966 / NRRL B-24157 / PYR-1) (Mycobacterium vanbaalenii).